Reading from the N-terminus, the 362-residue chain is Chorismate synthase (362 aa).

R47 serves as a coordination point for NADP(+). FMN-binding positions include 124 to 126 (RAS), G286, 301 to 305 (KPTAT), and R327.

This sequence belongs to the chorismate synthase family. As to quaternary structure, homotetramer. The cofactor is FMNH2.

The enzyme catalyses 5-O-(1-carboxyvinyl)-3-phosphoshikimate = chorismate + phosphate. The protein operates within metabolic intermediate biosynthesis; chorismate biosynthesis; chorismate from D-erythrose 4-phosphate and phosphoenolpyruvate: step 7/7. In terms of biological role, catalyzes the anti-1,4-elimination of the C-3 phosphate and the C-6 proR hydrogen from 5-enolpyruvylshikimate-3-phosphate (EPSP) to yield chorismate, which is the branch point compound that serves as the starting substrate for the three terminal pathways of aromatic amino acid biosynthesis. This reaction introduces a second double bond into the aromatic ring system. This Synechococcus sp. (strain WH7803) protein is Chorismate synthase.